The sequence spans 171 residues: Nicotinamide-nucleotide adenylyltransferase (171 aa).

The protein belongs to the archaeal NMN adenylyltransferase family.

It localises to the cytoplasm. The catalysed reaction is beta-nicotinamide D-ribonucleotide + ATP + H(+) = diphosphate + NAD(+). Its pathway is cofactor biosynthesis; NAD(+) biosynthesis; NAD(+) from nicotinamide D-ribonucleotide: step 1/1. The polypeptide is Nicotinamide-nucleotide adenylyltransferase (Ignicoccus hospitalis (strain KIN4/I / DSM 18386 / JCM 14125)).